The following is a 518-amino-acid chain: UPF0053 inner membrane protein YoaE (518 aa).

The Cytoplasmic segment spans residues 1–13 (MEFLMDPSIWAGL). A helical membrane pass occupies residues 14–34 (LTLVVLEIVLGIDNLVFIAIL). Residues 35–48 (ADKLPPKQRDKARL) are Periplasmic-facing. Residues 49 to 69 (LGLSLALIMRLGLLSLISWMV) traverse the membrane as a helical segment. The Cytoplasmic portion of the chain corresponds to 70-78 (TLTKPLFTV). Residues 79 to 99 (MDFSFSGRDLIMLFGGIFLLF) traverse the membrane as a helical segment. Topologically, residues 100-124 (KATTELHERLENRDHDSGHGKGYAS) are periplasmic. The helical transmembrane segment at 125–145 (FWVVVTQIVILDAVFSLDAVI) threads the bilayer. At 146-149 (TAVG) the chain is on the cytoplasmic side. A helical membrane pass occupies residues 150 to 170 (MVNHLPVMMAAVVIAMAVMLL). Residues 171–184 (ASKPLTRFVNQHPT) lie on the Periplasmic side of the membrane. Residues 185–205 (VVVLCLSFLLMIGLSLVAEGF) form a helical membrane-spanning segment. Residue G206 is a topological domain, cytoplasmic. Residues 207–227 (FHIPKGYLYAAIGFSIIIEVF) traverse the membrane as a helical segment. The Periplasmic segment spans residues 228 to 354 (NQIARRNFIR…IGIVRAKELL (127 aa)). 2 consecutive CBS domains span residues 304–363 (MTPR…GVDV) and 367–427 (ASAS…DADE). A helical membrane pass occupies residues 355–375 (VALEEGVDVAAIASASPAIIV). The Cytoplasmic segment spans residues 376 to 518 (PETLDPINLL…KEQPAHDEDE (143 aa)).

The protein belongs to the UPF0053 family.

Its subcellular location is the cell inner membrane. This Escherichia coli O157:H7 protein is UPF0053 inner membrane protein YoaE (yoaE).